We begin with the raw amino-acid sequence, 38 residues long: MTQPNPNKQSVEPNRTSLYWGLLLIFVLAVLFSNYFFN.

A helical transmembrane segment spans residues 17–37; sequence SLYWGLLLIFVLAVLFSNYFF.

It belongs to the PsbL family. PSII is composed of 1 copy each of membrane proteins PsbA, PsbB, PsbC, PsbD, PsbE, PsbF, PsbH, PsbI, PsbJ, PsbK, PsbL, PsbM, PsbT, PsbX, PsbY, PsbZ, Psb30/Ycf12, at least 3 peripheral proteins of the oxygen-evolving complex and a large number of cofactors. It forms dimeric complexes.

It localises to the plastid. The protein localises to the chloroplast thylakoid membrane. Functionally, one of the components of the core complex of photosystem II (PSII). PSII is a light-driven water:plastoquinone oxidoreductase that uses light energy to abstract electrons from H(2)O, generating O(2) and a proton gradient subsequently used for ATP formation. It consists of a core antenna complex that captures photons, and an electron transfer chain that converts photonic excitation into a charge separation. This subunit is found at the monomer-monomer interface and is required for correct PSII assembly and/or dimerization. This Adiantum capillus-veneris (Maidenhair fern) protein is Photosystem II reaction center protein L.